The sequence spans 3726 residues: Zinc finger homeobox protein 3 (3726 aa).

Disordered stretches follow at residues 1-79 (MEGC…SKEV) and 95-129 (MEHH…VENL). A C2H2-type 1 zinc finger spans residues 79–103 (VSCNECSASFSSLQTYMEHHCPGTH). The span at 116 to 126 (TSEEGEEESDV) shows a compositional bias: acidic residues. The C2H2-type 2 zinc-finger motif lies at 282-305 (LMCFLCKLSFGYVRSFVTHAVHDH). The interval 417–557 (SVPLGPLASS…GPASTTSNSA (141 aa)) is disordered. Serine 426 carries the post-translational modification Phosphoserine. Threonine 428 is subject to Phosphothreonine. A compositionally biased stretch (basic and acidic residues) spans 431-459 (SEGKDSGAAEGDKQESGGHQDCFSEKVEP). 2 stretches are compositionally biased toward acidic residues: residues 460-491 (AEEE…EEEE) and 500-510 (DLEEELEDSPS). A compositionally biased stretch (polar residues) spans 528 to 557 (SNPSISNSPLMPNVLQTLSRGPASTTSNSA). Serine 535 and serine 573 each carry phosphoserine. The disordered stretch occupies residues 590–621 (DFADESANKDSATAPEPNESTEGDDGGFVPHH). C2H2-type zinc fingers lie at residues 641–664 (VECP…TMMH), 672–695 (LKCP…KEKH), and 727–751 (FRCE…SDKH). Residues 805–829 (WRCEVCDYETNVARNLRIHMTSEKH) form a C2H2-type 6; atypical zinc finger. The C2H2-type 7; degenerate zinc-finger motif lies at 946 to 969 (FQCAVCNKFTTDNLDMLGLHMNVE). A C2H2-type 8; atypical zinc finger spans residues 985–1009 (YQCKLCRYNTQLKANFQLHCKTDKH). The segment at 1041 to 1065 (LKCNACDYYTNSLEKLRLHTVNSRH) adopts a C2H2-type 9; atypical zinc-finger fold. Residues 1089–1113 (YHCVLCNYSTKAKLNLIQHVRSMKH) form a C2H2-type 10; atypical zinc finger. The disordered stretch occupies residues 1125 to 1228 (LQKGLPEEDE…KRPKASEEIK (104 aa)). The span at 1149–1159 (DPEEPVEDAEG) shows a compositional bias: acidic residues. 2 stretches are compositionally biased toward polar residues: residues 1175–1191 (GSGS…SSSQ) and 1199–1217 (SPAT…TPLS). Serine 1207 carries the phosphoserine modification. A C2H2-type 11; atypical zinc finger spans residues 1233 to 1256 (YQCPYCKYSNADVNRLRVHAMTQH). The C2H2-type 12 zinc-finger motif lies at 1262–1285 (LRCPLCQDMLNNKIHLQLHLTHLH). Positions 1320–1361 (DGNSTLEEVGKQPEASEDPGKNILPPASMEHGGDLKPTSADP) are disordered. 3 C2H2-type zinc fingers span residues 1370-1395 (FLCW…NEVH), 1411-1433 (YRCN…SQYH), and 1439-1462 (TMCC…ETSH). Residues 1500-1539 (EEDKEEESDLEDKQSPTGSDSGSVQEDSGSEPKRALPFRK) form a disordered region. Residues 1514–1526 (SPTGSDSGSVQED) are compositionally biased toward polar residues. The segment at 1555 to 1579 (YKCTVCKESFTQKNILLVHYNSVSH) adopts a C2H2-type 16 zinc-finger fold. Serine 1600 is subject to Phosphoserine. The C2H2-type 17 zinc finger occupies 1606–1630 (FKCNTCNVAYSQSSTLEIHMRSVLH). 3 disordered regions span residues 1639 to 1678 (LEAA…TATN), 1706 to 1738 (NPIS…QQQQ), and 1866 to 1943 (LSQS…PRIA). A compositionally biased stretch (low complexity) spans 1643–1669 (SGNSNGTGNSGGVSLSSSTPSPVGSSG). Basic and acidic residues predominate over residues 1717 to 1727 (EPKEANRKKLA). Residues 1866-1878 (LSQSHSALLQPSQ) are compositionally biased toward low complexity. The segment covering 1879–1902 (HPEKKNKVVIKEKDKESQREREGP) has biased composition (basic and acidic residues). The C2H2-type 18 zinc finger occupies 1990–2013 (LECDSCGKLFSNILILKSHQEHVH). Disordered regions lie at residues 2037-2089 (YPLR…AQPS) and 2211-2249 (NKDS…WGSK). The span at 2041–2066 (PQTPEPPPPPPPPPPPPLPTAPPQPA) shows a compositional bias: pro residues. Residues 2152-2211 (NKRPRTRITDDQLRVLRQYFDINNSPSEEQIKEMADKSGLPQKVIKHWFRNTLFKERQRN) constitute a DNA-binding region (homeobox 1). Polar residues predominate over residues 2214–2223 (SPYNFSNPPI). The homeobox 2 DNA-binding region spans 2249–2308 (KRSSRTRFTDYQLRVLQDFFDANAYPKDDEFEQLSNLLNLPTRVIVVWFQNARQKARKNY). The segment at 2335–2358 (YQCKKCSLVFQRIFDLIKHQKKLC) adopts a C2H2-type 19; atypical zinc-finger fold. Residue lysine 2356 forms a Glycyl lysine isopeptide (Lys-Gly) (interchain with G-Cter in SUMO1) linkage. Disordered regions lie at residues 2383-2405 (TPTS…APSA) and 2429-2529 (NSKA…PQQL). Over residues 2458 to 2478 (QPKPEMQQQLEQLEQKTNAPQ) the composition is skewed to low complexity. Positions 2479 to 2507 (PKLPQPAAPSLPQPPPQAPPPQCPLPQSS) are enriched in pro residues. Over residues 2508 to 2521 (PSPSQLSHLPLKPL) the composition is skewed to low complexity. The C2H2-type 20 zinc finger occupies 2539-2561 (YQCDQCKLAFPSFEHWQEHQQLH). The Nuclear localization signal motif lies at 2624-2626 (KRK). The disordered stretch occupies residues 2628–2656 (EEKASASPGENDSGTGGEEPQRDKRLRTT). Position 2634 is a phosphoserine (serine 2634). Positions 2650–2709 (DKRLRTTITPEQLEILYQKYLLDSNPTRKMLDHIAHEVGLKKRVVQVWFQNTRARERKGQ) form a DNA-binding region, homeobox 3. The C2H2-type 21 zinc finger occupies 2720 to 2743 (RRCPFCRALFKAKTALEAHIRSRH). The segment covering 2780–2789 (SHLPPSSSDG) has biased composition (polar residues). Residues 2780 to 2805 (SHLPPSSSDGQGVPLSPVSKTMELSP) are disordered. Serine 2795 and serine 2804 each carry phosphoserine. Residue lysine 2815 forms a Glycyl lysine isopeptide (Lys-Gly) (interchain with G-Cter in SUMO1); alternate linkage. A Glycyl lysine isopeptide (Lys-Gly) (interchain with G-Cter in SUMO2); alternate cross-link involves residue lysine 2815. Positions 2850–2877 (AITDTTTGDEGNADNDSATGIATETKSS) are disordered. Phosphoserine occurs at positions 2900 and 2904. The tract at residues 2920 to 2955 (VDYSETSSLADPCSPSPGASGSAGKSGDGGDRPGQK) is disordered. The segment covering 2929 to 2944 (ADPCSPSPGASGSAGK) has biased composition (low complexity). The homeobox 4 DNA-binding region spans 2952-3011 (PGQKRFRTQMTNLQLKVLKSCFNDYRTPTMLECEVLGNDIGLPKRVVQVWFQNARAKEKK). The segment at 3032-3056 (TECTLCGIKYSARLSVRDHIFSQQH) adopts a C2H2-type 22 zinc-finger fold. Disordered regions lie at residues 3145 to 3274 (FTPA…AGTG) and 3415 to 3476 (QQQQ…SASA). The span at 3147–3156 (PANTALTSPK) shows a compositional bias: polar residues. Over residues 3181 to 3199 (PSSASLSSPTPAQATMAMA) the composition is skewed to low complexity. The segment covering 3200-3221 (PQPPPQPQQPQPPVQQPPPPPA) has biased composition (pro residues). Over residues 3222–3234 (AQQIPAPQLTPQQ) the composition is skewed to low complexity. Positions 3235–3267 (QRKDKDGEKGKEKEKAHKGKGEPLPVPKKEKGE) are enriched in basic and acidic residues. Residue lysine 3262 forms a Glycyl lysine isopeptide (Lys-Gly) (interchain with G-Cter in SUMO1) linkage. Serine 3434 carries the phosphoserine modification. Residues 3435 to 3453 (PDKDPAKESPKPEEQKNVP) show a composition bias toward basic and acidic residues. Phosphoserine is present on serine 3457. The C2H2-type 23 zinc finger occupies 3552–3576 (YHCLACESALCGEEALSQHLESALH). The segment at 3588–3726 (AKEHPSLLPH…TSVGTDTFRL (139 aa)) is disordered. Low complexity-rich tracts occupy residues 3605-3618 (STAS…HSND) and 3645-3677 (SRAS…VQPS). Serine 3616 bears the Phosphoserine mark. Serine 3700 carries the phosphoserine modification. The span at 3715–3726 (GLTSVGTDTFRL) shows a compositional bias: polar residues.

Interacts with ALKBH4 and PIAS3. Interacts with FNBP3. Interacts with ESR1, RUNX3, TRIM25, SMAD2 and SMAD3. Post-translationally, phosphorylated at Ser-2634 in both embryonic and adult brain. Phosphorylation at Ser-1600, Ser-2795, Ser-2804, Ser-2900, Ser-3434, Ser-3616 and Ser-3700 is restricted to the embryonic brain. Hyperphosphorylation in embryonic brain protects ZFHX3 from calpain/CAPN1-mediated degradation. In terms of processing, ubiquitinated, leading to its proteasomal degradation. Nuclear localization is essential for its sumoylation. Expressed in suprachiasmatic nucleus (SCN) of the brain (at protein level). Expressed in skeletal muscle. Levels of expression are high in myoblasts but low in differentiated muscle. Expressed in the heart, primarily in the atria.

The protein resides in the nucleus. Its subcellular location is the cytoplasm. Functionally, transcriptional regulator which can act as an activator or a repressor. Inhibits the enhancer element of the AFP gene by binding to its AT-rich core sequence. In concert with SMAD-dependent TGF-beta signaling can repress the transcription of AFP via its interaction with SMAD2/3. Regulates the circadian locomotor rhythms via transcriptional activation of neuropeptidergic genes which are essential for intercellular synchrony and rhythm amplitude in the suprachiasmatic nucleus (SCN) of the brain. Regulator of myoblasts differentiation through the binding to the AT-rich sequence of MYF6 promoter and promoter repression. Down-regulates the MUC5AC promoter in gastric cancer. In association with RUNX3, up-regulates CDKN1A promoter activity following TGF-beta stimulation. This Mus musculus (Mouse) protein is Zinc finger homeobox protein 3 (Zfhx3).